We begin with the raw amino-acid sequence, 807 residues long: F-box protein YLR352W (807 aa).

The region spanning L220–L266 is the F-box domain. Positions D607–Q616 are enriched in basic and acidic residues. Disordered stretches follow at residues D607–A647 and H716–S739. Composition is skewed to polar residues over residues S627–N644 and S723–E736.

In terms of assembly, interacts with SKP1 and CDC53. Component of the probable SCF(YBR352W) complex containing CDC53, SKP1, RBX1 and YBR352W.

Its pathway is protein modification; protein ubiquitination. Functionally, substrate recognition component of a SCF (SKP1-CUL1-F-box protein) E3 ubiquitin-protein ligase complex which mediates the ubiquitination and subsequent proteasomal degradation of target proteins. Probably recognizes and binds to phosphorylated target proteins. The chain is F-box protein YLR352W from Saccharomyces cerevisiae (strain ATCC 204508 / S288c) (Baker's yeast).